The sequence spans 204 residues: Glycerol-3-phosphate acyltransferase (204 aa).

A run of 5 helical transmembrane segments spans residues 8 to 28 (MLVFAYLLGSINSAIIVCYIF), 53 to 73 (VPAIITLAFDILKGLVPVVLA), 81 to 101 (FITACTALYAILGHIFPIFFG), 116 to 136 (FGFSWILGLIFVVTWLCVAVI), and 155 to 175 (VIFTSDLQVATPFLIIAIIIL).

The protein belongs to the PlsY family. In terms of assembly, probably interacts with PlsX.

The protein localises to the cell inner membrane. The catalysed reaction is an acyl phosphate + sn-glycerol 3-phosphate = a 1-acyl-sn-glycero-3-phosphate + phosphate. The protein operates within lipid metabolism; phospholipid metabolism. Functionally, catalyzes the transfer of an acyl group from acyl-phosphate (acyl-PO(4)) to glycerol-3-phosphate (G3P) to form lysophosphatidic acid (LPA). This enzyme utilizes acyl-phosphate as fatty acyl donor, but not acyl-CoA or acyl-ACP. The polypeptide is Glycerol-3-phosphate acyltransferase (Francisella philomiragia subsp. philomiragia (strain ATCC 25017 / CCUG 19701 / FSC 153 / O#319-036)).